Here is a 607-residue protein sequence, read N- to C-terminus: Aspartate--tRNA(Asp/Asn) ligase (607 aa).

Glu-176 is an L-aspartate binding site. An aspartate region spans residues 200-203 (QQFK). Residues Arg-222 and His-456 each coordinate L-aspartate. 222–224 (RDE) contributes to the ATP binding site. Glu-496 provides a ligand contact to ATP. An L-aspartate-binding site is contributed by Arg-503. 548–551 (GIDR) is a binding site for ATP.

The protein belongs to the class-II aminoacyl-tRNA synthetase family. Type 1 subfamily. Homodimer.

It is found in the cytoplasm. The catalysed reaction is tRNA(Asx) + L-aspartate + ATP = L-aspartyl-tRNA(Asx) + AMP + diphosphate. Its function is as follows. Aspartyl-tRNA synthetase with relaxed tRNA specificity since it is able to aspartylate not only its cognate tRNA(Asp) but also tRNA(Asn). Reaction proceeds in two steps: L-aspartate is first activated by ATP to form Asp-AMP and then transferred to the acceptor end of tRNA(Asp/Asn). This chain is Aspartate--tRNA(Asp/Asn) ligase, found in Parvibaculum lavamentivorans (strain DS-1 / DSM 13023 / NCIMB 13966).